We begin with the raw amino-acid sequence, 669 residues long: Putative transcription factor SOX-14 (669 aa).

Positions 1-12 (MIAKPNQATTEP) are enriched in polar residues. Disordered stretches follow at residues 1-149 (MIAK…EMTL), 254-336 (YKYR…PKYE), and 419-439 (SSLT…MDNI). The segment covering 17–37 (RPGTVPTVPATTPARPATITI) has biased composition (low complexity). The segment covering 52 to 71 (TLPPFSPSPSPASSPSPAPA) has biased composition (pro residues). A compositionally biased stretch (polar residues) spans 75–84 (GAQKTQSQAA). The span at 88 to 105 (PAAVASPSAPVAAAAPKT) shows a compositional bias: low complexity. A compositionally biased stretch (basic and acidic residues) spans 130-145 (RESEMDGERSPSHSGH). Residues 187–255 (IKRPMNAFMV…LHMIEYPNYK (69 aa)) constitute a DNA-binding region (HMG box). Positions 284 to 294 (TTNNNNSLTTL) are enriched in low complexity. Positions 295 to 318 (AINGTTTAGRKSKRSTSTCQSGSA) are enriched in polar residues. Positions 322–336 (LRNDSGDTSSKPKYE) are enriched in basic and acidic residues. The span at 419 to 431 (SSLTQSQHNQSDP) shows a compositional bias: polar residues.

It is found in the nucleus. The polypeptide is Putative transcription factor SOX-14 (Sox14) (Drosophila melanogaster (Fruit fly)).